The sequence spans 517 residues: 2-isopropylmalate synthase (517 aa).

In terms of domain architecture, Pyruvate carboxyltransferase spans 7–269; that stretch reads VIIFDTTLRD…ETGIDTTQIV (263 aa). Mn(2+) is bound by residues D16, H204, H206, and N240. The interval 366 to 517 is required for the condensation reaction. Not required to bind substrate; it reads LADKKREIFD…KPKAQGSGTI (152 aa). Residues 395 to 517 form a regulatory domain region; sequence KFISQKISTE…KPKAQGSGTI (123 aa).

Belongs to the alpha-IPM synthase/homocitrate synthase family. LeuA type 1 subfamily. In terms of assembly, homodimer. Remains a homodimer in the presence of L-leucine. Requires Mn(2+) as cofactor.

It is found in the cytoplasm. The catalysed reaction is 3-methyl-2-oxobutanoate + acetyl-CoA + H2O = (2S)-2-isopropylmalate + CoA + H(+). It participates in amino-acid biosynthesis; L-leucine biosynthesis; L-leucine from 3-methyl-2-oxobutanoate: step 1/4. Its activity is regulated as follows. Inhibited by 3-bromo substituents and Leu, the pathway end product. Functionally, catalyzes the condensation of the acetyl group of acetyl-CoA with 3-methyl-2-oxobutanoate (2-ketoisovalerate) to form 3-carboxy-3-hydroxy-4-methylpentanoate (2-isopropylmalate). Complements an E.coli deletion. The protein is 2-isopropylmalate synthase of Neisseria meningitidis serogroup B (strain ATCC BAA-335 / MC58).